The chain runs to 186 residues: Pyridoxal 5'-phosphate synthase subunit PdxT (186 aa).

47–49 (GES) lines the L-glutamine pocket. Cysteine 76 functions as the Nucleophile in the catalytic mechanism. L-glutamine-binding positions include arginine 102 and 130 to 131 (IR). Residues histidine 166 and glutamate 168 each act as charge relay system in the active site.

The protein belongs to the glutaminase PdxT/SNO family. In terms of assembly, in the presence of PdxS, forms a dodecamer of heterodimers. Only shows activity in the heterodimer.

It catalyses the reaction aldehydo-D-ribose 5-phosphate + D-glyceraldehyde 3-phosphate + L-glutamine = pyridoxal 5'-phosphate + L-glutamate + phosphate + 3 H2O + H(+). It carries out the reaction L-glutamine + H2O = L-glutamate + NH4(+). It functions in the pathway cofactor biosynthesis; pyridoxal 5'-phosphate biosynthesis. Its function is as follows. Catalyzes the hydrolysis of glutamine to glutamate and ammonia as part of the biosynthesis of pyridoxal 5'-phosphate. The resulting ammonia molecule is channeled to the active site of PdxS. The polypeptide is Pyridoxal 5'-phosphate synthase subunit PdxT (Staphylococcus epidermidis (strain ATCC 35984 / DSM 28319 / BCRC 17069 / CCUG 31568 / BM 3577 / RP62A)).